We begin with the raw amino-acid sequence, 287 residues long: Light-independent protochlorophyllide reductase iron-sulfur ATP-binding protein (287 aa).

ATP-binding positions include 10 to 15 (GIGKST) and Lys-39. Mg(2+) is bound at residue Ser-14. [4Fe-4S] cluster is bound by residues Cys-95 and Cys-129. 180 to 181 (NR) contacts ATP.

Belongs to the NifH/BchL/ChlL family. In terms of assembly, homodimer. Protochlorophyllide reductase is composed of three subunits; ChlL, ChlN and ChlB. [4Fe-4S] cluster serves as cofactor.

The protein resides in the plastid. It is found in the chloroplast. It catalyses the reaction chlorophyllide a + oxidized 2[4Fe-4S]-[ferredoxin] + 2 ADP + 2 phosphate = protochlorophyllide a + reduced 2[4Fe-4S]-[ferredoxin] + 2 ATP + 2 H2O. The protein operates within porphyrin-containing compound metabolism; chlorophyll biosynthesis (light-independent). In terms of biological role, component of the dark-operative protochlorophyllide reductase (DPOR) that uses Mg-ATP and reduced ferredoxin to reduce ring D of protochlorophyllide (Pchlide) to form chlorophyllide a (Chlide). This reaction is light-independent. The L component serves as a unique electron donor to the NB-component of the complex, and binds Mg-ATP. The sequence is that of Light-independent protochlorophyllide reductase iron-sulfur ATP-binding protein from Nephroselmis olivacea (Green alga).